We begin with the raw amino-acid sequence, 126 residues long: Large ribosomal subunit protein uL22 (126 aa).

It belongs to the universal ribosomal protein uL22 family. As to quaternary structure, part of the 50S ribosomal subunit.

This protein binds specifically to 23S rRNA; its binding is stimulated by other ribosomal proteins, e.g. L4, L17, and L20. It is important during the early stages of 50S assembly. It makes multiple contacts with different domains of the 23S rRNA in the assembled 50S subunit and ribosome. Its function is as follows. The globular domain of the protein is located near the polypeptide exit tunnel on the outside of the subunit, while an extended beta-hairpin is found that lines the wall of the exit tunnel in the center of the 70S ribosome. The polypeptide is Large ribosomal subunit protein uL22 (Rhodospirillum rubrum (strain ATCC 11170 / ATH 1.1.1 / DSM 467 / LMG 4362 / NCIMB 8255 / S1)).